Reading from the N-terminus, the 87-residue chain is MEKLTILVLVATVLLAIQVLVQSDGEKPLKRRVKQYAAKRLSALMRGPRQCTPRNQRCEGDAECCPNLVCKCFTRPDCQSGYKCDTS.

The first 23 residues, 1–23 (MEKLTILVLVATVLLAIQVLVQS), serve as a signal peptide directing secretion. Residues 24 to 49 (DGEKPLKRRVKQYAAKRLSALMRGPR) constitute a propeptide that is removed on maturation. The residue at position 50 (glutamine 50) is a Pyrrolidone carboxylic acid.

It belongs to the conotoxin O2 superfamily. In terms of processing, contains 4 disulfide bonds. As to expression, expressed by the venom duct.

The protein resides in the secreted. The polypeptide is Conotoxin Bt15a (Conus betulinus (Beech cone)).